We begin with the raw amino-acid sequence, 115 residues long: Galanin-like peptide (115 aa).

Residues 1 to 23 (MAPSVPLVLLLVLLLSLAETPAS) form the signal peptide. Positions 86-115 (NVMEAFAKPEIGDLDVLSKKIPKEEDVLKS) are excised as a propeptide.

This sequence belongs to the galanin family. In terms of tissue distribution, hypothalamus and pituitary gland.

Its subcellular location is the secreted. Its function is as follows. Hypothalamic neuropeptide which binds to the G-protein-coupled galanin receptors (GALR1, GALR2 and GALR3). Involved in a large number of putative physiological functions in CNS homeostatic processes, including the regulation of gonadotropin-releasing hormone secretion. In terms of biological role, exhibits potent and dose-dependent vasoconstrictor and anti-edema activity in the cutaneous microvasculature, a physiologic effects which does not appear to be mediated via GALR1 or GALR2. Exhibits antimicrobial activity against Gram-negative bacterias, inducing bacterial membrane blebbing. The sequence is that of Galanin-like peptide (GALP) from Macaca nemestrina (Pig-tailed macaque).